The chain runs to 343 residues: ATP-dependent (S)-NAD(P)H-hydrate dehydratase (343 aa).

A mitochondrion-targeting transit peptide spans 1-42 (MAVHACGAAAAVVALLSAAIALQWSPLYAVLQRALSLHTAHA). The YjeF C-terminal domain maps to 49–340 (LFQLVRNIVP…TEVGTAFSRL (292 aa)). Lysine 63 bears the N6-acetyllysine mark. Tyrosine 81 is modified (phosphotyrosine). (6S)-NADPHX contacts are provided by residues glycine 149 and 202–208 (NHVEFSR). At serine 216 the chain carries Phosphoserine. ATP-binding positions include 242 to 246 (KGEQD) and 261 to 270 (GSSRRCGGQG). Residue aspartate 271 coordinates (6S)-NADPHX.

Belongs to the NnrD/CARKD family. The cofactor is Mg(2+).

The protein localises to the mitochondrion. The catalysed reaction is (6S)-NADHX + ATP = ADP + phosphate + NADH + H(+). It catalyses the reaction (6S)-NADPHX + ATP = ADP + phosphate + NADPH + H(+). Catalyzes the dehydration of the S-form of NAD(P)HX at the expense of ATP, which is converted to ADP. Together with NAD(P)HX epimerase, which catalyzes the epimerization of the S- and R-forms, the enzyme allows the repair of both epimers of NAD(P)HX, a damaged form of NAD(P)H that is a result of enzymatic or heat-dependent hydration. This chain is ATP-dependent (S)-NAD(P)H-hydrate dehydratase, found in Mus musculus (Mouse).